A 530-amino-acid polypeptide reads, in one-letter code: Probable serine/threonine-protein kinase fnkB (530 aa).

Positions 11-268 (WEIVETLKSN…SITLIDHPFL (258 aa)) constitute a Protein kinase domain. Residues 17 to 25 (LKSNVFKVN) and Lys-43 each bind ATP. The active-site Proton acceptor is the Asp-131.

The protein belongs to the protein kinase superfamily. STE Ser/Thr protein kinase family. Mg(2+) is required as a cofactor.

The catalysed reaction is L-seryl-[protein] + ATP = O-phospho-L-seryl-[protein] + ADP + H(+). The enzyme catalyses L-threonyl-[protein] + ATP = O-phospho-L-threonyl-[protein] + ADP + H(+). The protein is Probable serine/threonine-protein kinase fnkB of Dictyostelium discoideum (Social amoeba).